Consider the following 109-residue polypeptide: Cell division protein ZapA (109 aa).

Positions 21 to 99 (PEQQDALNQA…IEQALLEQGR (79 aa)) form a coiled coil.

The protein belongs to the ZapA family. Type 1 subfamily. As to quaternary structure, homodimer. Interacts with FtsZ.

The protein localises to the cytoplasm. Its function is as follows. Activator of cell division through the inhibition of FtsZ GTPase activity, therefore promoting FtsZ assembly into bundles of protofilaments necessary for the formation of the division Z ring. It is recruited early at mid-cell but it is not essential for cell division. This is Cell division protein ZapA from Pectobacterium carotovorum subsp. carotovorum (strain PC1).